Consider the following 420-residue polypeptide: Proteinase-activated receptor 1 (420 aa).

The signal sequence occupies residues 1–20; that stretch reads MMELRVLLLLLLLTLLGAMG. Positions 21 to 42 are cleaved as a propeptide — removed for receptor activation; sequence SLCLANSDTQAKGAHSNNMTIK. N38 is a glycosylation site (N-linked (GlcNAc...) asparagine). The Extracellular portion of the chain corresponds to 43-101; the sequence is TFRIFDDSESEFEEIPWDELDESGEGSGDQAPVSRSARKPIRRNITKEAEQYLSSQWLT. A disordered region spans residues 61–80; it reads ELDESGEGSGDQAPVSRSAR. N86 carries N-linked (GlcNAc...) asparagine glycosylation. A helical transmembrane segment spans residues 102-127; that stretch reads KFVPSLYTVVFIVGLPLNLLAIIIFL. Residues 128–136 are Cytoplasmic-facing; sequence FKMKVRKPA. Residues 137–156 form a helical membrane-spanning segment; the sequence is VVYMLNLAIADVFFVSVLPF. Topologically, residues 157–175 are extracellular; that stretch reads KIAYHLSGNDWLFGPGMCR. C174 and C253 are joined by a disulfide. A helical membrane pass occupies residues 176–197; it reads IVTAIFYCNMYCSVLLIASISV. Residues 198–217 lie on the Cytoplasmic side of the membrane; the sequence is DRFLAVVYPMHSLSWRTMSR. Residues 218–238 traverse the membrane as a helical segment; the sequence is AYMACSFIWLISIASTIPLLV. The Extracellular portion of the chain corresponds to 239–267; it reads TEQTQKIPRLDITTCHDVLDLKDLKDFYI. A helical transmembrane segment spans residues 268-287; sequence YYFSSFCLLFFFVPFIITTI. The Cytoplasmic segment spans residues 288–310; that stretch reads CYIGIIRSLSSSSIENSCKKTRA. Residues 311-333 traverse the membrane as a helical segment; it reads LFLAVVVLCVFIICFGPTNVLFL. The Extracellular segment spans residues 334–345; sequence THYLQEANEFLY. A helical transmembrane segment spans residues 346 to 369; it reads FAYILSACVGSVSCCLDPLIYYYA. At 370 to 420 the chain is on the cytoplasmic side; that stretch reads SSQCQRYLYSLLCCRKVSEPGSSTGQLMSTAMKNDNCSTNAKSSIYKKLLA.

The protein belongs to the G-protein coupled receptor 1 family. In terms of processing, proteolytic cleavage generates a new N-terminus that functions as a tethered ligand.

Its subcellular location is the cell membrane. In terms of biological role, high affinity receptor that binds the activated thrombin, leading to calcium release from intracellular stores. The thrombin-activated receptor signaling pathway is mediated through PTX-insensitive G proteins, activation of phospholipase C resulting in the production of 1D-myo-inositol 1,4,5-trisphosphate (InsP3) which binds to InsP3 receptors causing calcium release from the stores. The chain is Proteinase-activated receptor 1 from Xenopus laevis (African clawed frog).